Consider the following 382-residue polypeptide: Succinate--CoA ligase [ADP-forming] subunit beta 1 (382 aa).

Positions 9–235 (KQIFAKHGIR…ATEEDPLERE (227 aa)) constitute an ATP-grasp domain. Residues Lys-45, 52–54 (GRG), Glu-91, Leu-94, and Glu-99 contribute to the ATP site. 2 residues coordinate Mg(2+): Asn-191 and Asp-204. A substrate-binding site is contributed by Asn-255.

Belongs to the succinate/malate CoA ligase beta subunit family. Heterotetramer of two alpha and two beta subunits. The cofactor is Mg(2+).

It catalyses the reaction succinate + ATP + CoA = succinyl-CoA + ADP + phosphate. It carries out the reaction GTP + succinate + CoA = succinyl-CoA + GDP + phosphate. It participates in carbohydrate metabolism; tricarboxylic acid cycle; succinate from succinyl-CoA (ligase route): step 1/1. Succinyl-CoA synthetase functions in the citric acid cycle (TCA), coupling the hydrolysis of succinyl-CoA to the synthesis of either ATP or GTP and thus represents the only step of substrate-level phosphorylation in the TCA. The beta subunit provides nucleotide specificity of the enzyme and binds the substrate succinate, while the binding sites for coenzyme A and phosphate are found in the alpha subunit. The protein is Succinate--CoA ligase [ADP-forming] subunit beta 1 of Archaeoglobus fulgidus (strain ATCC 49558 / DSM 4304 / JCM 9628 / NBRC 100126 / VC-16).